A 307-amino-acid polypeptide reads, in one-letter code: Putative lipid kinase SERP0390 (307 aa).

Positions 3 to 139 (QPYNHGVLFY…YDVLKVNDLY (137 aa)) constitute a DAGKc domain. Residues serine 44, 74–80 (GDGTLNE), and threonine 101 each bind ATP. 3 residues coordinate Mg(2+): serine 220, aspartate 223, and arginine 225. Glutamate 281 functions as the Proton acceptor in the catalytic mechanism.

It belongs to the diacylglycerol/lipid kinase family. Mg(2+) is required as a cofactor.

May catalyze the ATP-dependent phosphorylation of lipids other than diacylglycerol (DAG). The polypeptide is Putative lipid kinase SERP0390 (Staphylococcus epidermidis (strain ATCC 35984 / DSM 28319 / BCRC 17069 / CCUG 31568 / BM 3577 / RP62A)).